Reading from the N-terminus, the 1337-residue chain is Phosphoribosylformylglycinamidine synthase (1337 aa).

S215 bears the Phosphoserine mark. ATP is bound by residues 322-333 (GATTGTGGRIRD) and 402-404 (AGF). Residues T619 and T622 each carry the phosphothreonine modification. A705 is an ATP binding site. Positions 706, 745, 749, and 908 each coordinate Mg(2+). S910 contacts ATP. The region spanning 1063-1301 (RVAILREEGS…ALMPHPERAV (239 aa)) is the Glutamine amidotransferase type-1 domain. Residue C1157 is the Nucleophile of the active site. Active-site residues include H1296 and E1298.

In the N-terminal section; belongs to the FGAMS family.

The protein resides in the cytoplasm. The enzyme catalyses N(2)-formyl-N(1)-(5-phospho-beta-D-ribosyl)glycinamide + L-glutamine + ATP + H2O = 2-formamido-N(1)-(5-O-phospho-beta-D-ribosyl)acetamidine + L-glutamate + ADP + phosphate + H(+). It participates in purine metabolism; IMP biosynthesis via de novo pathway; 5-amino-1-(5-phospho-D-ribosyl)imidazole from N(2)-formyl-N(1)-(5-phospho-D-ribosyl)glycinamide: step 1/2. Its function is as follows. Phosphoribosylformylglycinamidine synthase involved in the purines biosynthetic pathway. Catalyzes the ATP-dependent conversion of formylglycinamide ribonucleotide (FGAR) and glutamine to yield formylglycinamidine ribonucleotide (FGAM) and glutamate. The protein is Phosphoribosylformylglycinamidine synthase (Pfas) of Mus musculus (Mouse).